A 37-amino-acid polypeptide reads, in one-letter code: Dolichyl-diphosphooligosaccharide--protein glycosyltransferase subunit 4B (37 aa).

Residues 1–8 (MFDDQDLG) lie on the Lumenal side of the membrane. The helical transmembrane segment at 9–29 (FFANFLGIFIFVLVMAYHFVM) threads the bilayer. Topologically, residues 30-37 (ADVKYEGN) are cytoplasmic.

It belongs to the OST4 family. Component of the oligosaccharyltransferase (OST) complex.

The protein resides in the endoplasmic reticulum membrane. Its function is as follows. Subunit of the oligosaccharyl transferase (OST) complex that catalyzes the initial transfer of a defined glycan (Glc(3)Man(9)GlcNAc(2) in eukaryotes) from the lipid carrier dolichol-pyrophosphate to an asparagine residue within an Asn-X-Ser/Thr consensus motif in nascent polypeptide chains, the first step in protein N-glycosylation. N-glycosylation occurs cotranslationally and the complex associates with the Sec61 complex at the channel-forming translocon complex that mediates protein translocation across the endoplasmic reticulum (ER). All subunits are required for a maximal enzyme activity. This chain is Dolichyl-diphosphooligosaccharide--protein glycosyltransferase subunit 4B (OST4B), found in Oryza sativa subsp. japonica (Rice).